The sequence spans 171 residues: ATP synthase subunit b (171 aa).

The helical transmembrane segment at Phe2–Leu22 threads the bilayer.

Belongs to the ATPase B chain family. F-type ATPases have 2 components, F(1) - the catalytic core - and F(0) - the membrane proton channel. F(1) has five subunits: alpha(3), beta(3), gamma(1), delta(1), epsilon(1). F(0) has three main subunits: a(1), b(2) and c(10-14). The alpha and beta chains form an alternating ring which encloses part of the gamma chain. F(1) is attached to F(0) by a central stalk formed by the gamma and epsilon chains, while a peripheral stalk is formed by the delta and b chains.

The protein localises to the cell inner membrane. In terms of biological role, f(1)F(0) ATP synthase produces ATP from ADP in the presence of a proton or sodium gradient. F-type ATPases consist of two structural domains, F(1) containing the extramembraneous catalytic core and F(0) containing the membrane proton channel, linked together by a central stalk and a peripheral stalk. During catalysis, ATP synthesis in the catalytic domain of F(1) is coupled via a rotary mechanism of the central stalk subunits to proton translocation. Component of the F(0) channel, it forms part of the peripheral stalk, linking F(1) to F(0). This Helicobacter pylori (strain ATCC 700392 / 26695) (Campylobacter pylori) protein is ATP synthase subunit b.